A 184-amino-acid polypeptide reads, in one-letter code: Chromophore lyase CpcS/CpeS 1 (184 aa).

It belongs to the CpcS/CpeS biliprotein lyase family.

Functionally, covalently attaches a chromophore to Cys residue(s) of phycobiliproteins. The polypeptide is Chromophore lyase CpcS/CpeS 1 (Synechococcus sp. (strain JA-3-3Ab) (Cyanobacteria bacterium Yellowstone A-Prime)).